The primary structure comprises 293 residues: ESX-3 secretion-associated protein EspG3 (293 aa).

Belongs to the EspG family.

The protein resides in the cytoplasm. The protein is ESX-3 secretion-associated protein EspG3 of Mycolicibacterium smegmatis (strain ATCC 700084 / mc(2)155) (Mycobacterium smegmatis).